Reading from the N-terminus, the 150-residue chain is MELILLEKVSNLGNLGDRVRVRPGYGRNYLLPYGKAKMATEENIRYFEERRAELEKAAREAEQAAQARLEQLQELTLTIKAKVGEQGKLFGSVGPADIAEAAEQAGVELARREVRMPEGPIRVAGEYDVQVSLYTDVEGTVKVVVEGDAS.

It belongs to the bacterial ribosomal protein bL9 family.

Its function is as follows. Binds to the 23S rRNA. The sequence is that of Large ribosomal subunit protein bL9 from Halorhodospira halophila (strain DSM 244 / SL1) (Ectothiorhodospira halophila (strain DSM 244 / SL1)).